A 394-amino-acid polypeptide reads, in one-letter code: Elongation factor Tu (394 aa).

The region spanning 10 to 204 is the tr-type G domain; the sequence is KPHVNIGTIG…AVDSYIPQPV (195 aa). The tract at residues 19 to 26 is G1; sequence GHVDHGKT. A GTP-binding site is contributed by 19–26; that stretch reads GHVDHGKT. Thr-26 is a Mg(2+) binding site. The G2 stretch occupies residues 60–64; the sequence is GITIS. The G3 stretch occupies residues 81-84; sequence DCPG. GTP-binding positions include 81–85 and 136–139; these read DCPGH and NKVD. Residues 136-139 form a G4 region; it reads NKVD. The G5 stretch occupies residues 174 to 176; it reads SAL.

Belongs to the TRAFAC class translation factor GTPase superfamily. Classic translation factor GTPase family. EF-Tu/EF-1A subfamily. As to quaternary structure, monomer.

The protein resides in the cytoplasm. It carries out the reaction GTP + H2O = GDP + phosphate + H(+). In terms of biological role, GTP hydrolase that promotes the GTP-dependent binding of aminoacyl-tRNA to the A-site of ribosomes during protein biosynthesis. In Rickettsia felis (strain ATCC VR-1525 / URRWXCal2) (Rickettsia azadi), this protein is Elongation factor Tu.